The following is a 269-amino-acid chain: UPF0494 membrane protein C1348.01 (269 aa).

The next 4 helical transmembrane spans lie at 107–127 (WPLL…KFEV), 144–164 (IWVP…SLIF), 177–197 (GVII…IAAL), and 201–221 (ITGL…LSLG).

The protein belongs to the UPF0494 family.

It is found in the vacuole membrane. This chain is UPF0494 membrane protein C1348.01, found in Schizosaccharomyces pombe (strain 972 / ATCC 24843) (Fission yeast).